The primary structure comprises 343 residues: Ribosomal RNA small subunit methyltransferase C (343 aa).

It belongs to the methyltransferase superfamily. RsmC family. As to quaternary structure, monomer.

It localises to the cytoplasm. The catalysed reaction is guanosine(1207) in 16S rRNA + S-adenosyl-L-methionine = N(2)-methylguanosine(1207) in 16S rRNA + S-adenosyl-L-homocysteine + H(+). Specifically methylates the guanine in position 1207 of 16S rRNA in the 30S particle. In Escherichia coli O8 (strain IAI1), this protein is Ribosomal RNA small subunit methyltransferase C.